The following is a 101-amino-acid chain: Large ribosomal subunit protein uL23 (101 aa).

The protein belongs to the universal ribosomal protein uL23 family. As to quaternary structure, part of the 50S ribosomal subunit. Contacts protein L29, and trigger factor when it is bound to the ribosome.

Functionally, one of the early assembly proteins it binds 23S rRNA. One of the proteins that surrounds the polypeptide exit tunnel on the outside of the ribosome. Forms the main docking site for trigger factor binding to the ribosome. This is Large ribosomal subunit protein uL23 from Corynebacterium jeikeium (strain K411).